The sequence spans 82 residues: Large ribosomal subunit protein bL31B (82 aa).

It belongs to the bacterial ribosomal protein bL31 family. Type B subfamily. Part of the 50S ribosomal subunit.

The sequence is that of Large ribosomal subunit protein bL31B from Dichelobacter nodosus (strain VCS1703A).